A 693-amino-acid chain; its full sequence is Elongation factor G (693 aa).

One can recognise a tr-type G domain in the interval 8–284 (HMVRNIGIAA…AVIDYLPAPD (277 aa)). GTP contacts are provided by residues 17-24 (AHIDAGKT), 81-85 (DTPGH), and 135-138 (NKMD).

It belongs to the TRAFAC class translation factor GTPase superfamily. Classic translation factor GTPase family. EF-G/EF-2 subfamily.

The protein localises to the cytoplasm. In terms of biological role, catalyzes the GTP-dependent ribosomal translocation step during translation elongation. During this step, the ribosome changes from the pre-translocational (PRE) to the post-translocational (POST) state as the newly formed A-site-bound peptidyl-tRNA and P-site-bound deacylated tRNA move to the P and E sites, respectively. Catalyzes the coordinated movement of the two tRNA molecules, the mRNA and conformational changes in the ribosome. The sequence is that of Elongation factor G from Nautilia profundicola (strain ATCC BAA-1463 / DSM 18972 / AmH).